A 288-amino-acid chain; its full sequence is 33 kDa chaperonin (288 aa).

2 disulfides stabilise this stretch: Cys236-Cys238 and Cys269-Cys272.

This sequence belongs to the HSP33 family. Post-translationally, under oxidizing conditions two disulfide bonds are formed involving the reactive cysteines. Under reducing conditions zinc is bound to the reactive cysteines and the protein is inactive.

The protein localises to the cytoplasm. Redox regulated molecular chaperone. Protects both thermally unfolding and oxidatively damaged proteins from irreversible aggregation. Plays an important role in the bacterial defense system toward oxidative stress. This Syntrophotalea carbinolica (strain DSM 2380 / NBRC 103641 / GraBd1) (Pelobacter carbinolicus) protein is 33 kDa chaperonin.